A 323-amino-acid chain; its full sequence is Galactosylgalactosylxylosylprotein 3-beta-glucuronosyltransferase 2 (323 aa).

Residues 1 to 2 are Cytoplasmic-facing; that stretch reads MK. Residues 3–23 form a helical; Signal-anchor for type II membrane protein membrane-spanning segment; the sequence is SALFTRFFILLPWILIVIIML. Residues 24–323 are Lumenal-facing; sequence DVDTRRPVPP…YHLDTVKIEV (300 aa). The interval 51–80 is disordered; that stretch reads RLPLRRGGPAHGTQKRNQSRPQPQPEPQLP. N67 is a glycosylation site (N-linked (GlcNAc...) asparagine). UDP-alpha-D-glucuronate is bound by residues 87 to 89, D118, R155, R160, and 185 to 187; these read PTY and DDD. Residue D187 coordinates Mn(2+). Residues 234-243 form an interaction with galactose moiety of substrate glycoprotein region; that stretch reads WRADRPFAID. E273 acts as the Proton donor/acceptor in catalysis. N292 carries an N-linked (GlcNAc...) asparagine glycan. 300-302 serves as a coordination point for UDP-alpha-D-glucuronate; sequence HTR.

This sequence belongs to the glycosyltransferase 43 family. In terms of assembly, homodimer. The cofactor is Mn(2+). Expressed in the trachea, retina, spinal cord, hippocampus and other brain regions, and, at lower levels, in testis and ovary.

The protein resides in the golgi apparatus membrane. It carries out the reaction 3-O-(beta-D-galactosyl-(1-&gt;3)-beta-D-galactosyl-(1-&gt;4)-beta-D-xylosyl)-L-seryl-[protein] + UDP-alpha-D-glucuronate = 3-O-(beta-D-GlcA-(1-&gt;3)-beta-D-Gal-(1-&gt;3)-beta-D-Gal-(1-&gt;4)-beta-D-Xyl)-L-seryl-[protein] + UDP + H(+). The protein operates within protein modification; protein glycosylation. Its function is as follows. Involved in the biosynthesis of L2/HNK-1 carbohydrate epitope on both glycolipids and glycoproteins. The polypeptide is Galactosylgalactosylxylosylprotein 3-beta-glucuronosyltransferase 2 (B3GAT2) (Homo sapiens (Human)).